We begin with the raw amino-acid sequence, 469 residues long: 6-phosphofructo-2-kinase/fructose-2,6-bisphosphatase 4 (469 aa).

Positions Met1–Pro249 are 6-phosphofructo-2-kinase. Gly46 to Tyr54 is a binding site for ATP. Arg79 and Arg103 together coordinate beta-D-fructose 6-phosphate. Asp129 is an active-site residue. 2 residues coordinate beta-D-fructose 6-phosphate: Thr131 and Arg137. The active site involves Cys159. Asn168 to Lys173 provides a ligand contact to ATP. Lys173, Arg194, and Tyr198 together coordinate beta-D-fructose 6-phosphate. Positions Arg250–Gln469 are fructose-2,6-bisphosphatase. Arg256 serves as a coordination point for beta-D-fructose 2,6-bisphosphate. His257 (tele-phosphohistidine intermediate) is an active-site residue. Asn263, Gly269, and Arg306 together coordinate beta-D-fructose 2,6-bisphosphate. The active-site Proton donor/acceptor is the Glu326. Beta-D-fructose 2,6-bisphosphate contacts are provided by Tyr337, Arg351, Lys355, Tyr366, Gln392, and Arg396. Phe348–Arg351 provides a ligand contact to ATP. ATP contacts are provided by residues Gln392–Arg396 and Tyr428. Thr444 is subject to Phosphothreonine; by PKC.

In the C-terminal section; belongs to the phosphoglycerate mutase family. As to quaternary structure, homodimer.

It carries out the reaction beta-D-fructose 2,6-bisphosphate + H2O = beta-D-fructose 6-phosphate + phosphate. The catalysed reaction is beta-D-fructose 6-phosphate + ATP = beta-D-fructose 2,6-bisphosphate + ADP + H(+). The most important regulatory mechanism of these opposing activities is by phosphorylation and dephosphorylation of the enzyme. Its function is as follows. Synthesis and degradation of fructose 2,6-bisphosphate. The polypeptide is 6-phosphofructo-2-kinase/fructose-2,6-bisphosphatase 4 (PFKFB4) (Homo sapiens (Human)).